The sequence spans 281 residues: MNIADGRQAFSAPAKLNLDLRITGRREDGYHNIESIFCLIDLQDTVYLKPRDDGKIILHNPVDGMPQEVDLSYRAASLLQKYARNPAGVEIWLDKKIPTGAGLGGGSSDAATVLLVLNRWWQCGLTQRQLIDSGAALGADVPFFIFGKNAFARGIGDRLDEMDIPKQWYVIVKPPVHVSTAKIFTHESLTRNSASSIMPTFQNLQPFRNDMQAVVFKEYPEVWKAYSELSRYGFALMTGSGACVFTACQDRNSAYNIYRQVSDLYEAYLAEGLSKHPLLSV.

Lysine 15 is a catalytic residue. 98 to 108 is a binding site for ATP; that stretch reads PTGAGLGGGSS. Aspartate 140 is a catalytic residue.

The protein belongs to the GHMP kinase family. IspE subfamily.

The catalysed reaction is 4-CDP-2-C-methyl-D-erythritol + ATP = 4-CDP-2-C-methyl-D-erythritol 2-phosphate + ADP + H(+). The protein operates within isoprenoid biosynthesis; isopentenyl diphosphate biosynthesis via DXP pathway; isopentenyl diphosphate from 1-deoxy-D-xylulose 5-phosphate: step 3/6. Its function is as follows. Catalyzes the phosphorylation of the position 2 hydroxy group of 4-diphosphocytidyl-2C-methyl-D-erythritol. The sequence is that of 4-diphosphocytidyl-2-C-methyl-D-erythritol kinase from Neisseria meningitidis serogroup B (strain ATCC BAA-335 / MC58).